Consider the following 93-residue polypeptide: Small ribosomal subunit protein uS17 (93 aa).

Belongs to the universal ribosomal protein uS17 family. In terms of assembly, part of the 30S ribosomal subunit.

Functionally, one of the primary rRNA binding proteins, it binds specifically to the 5'-end of 16S ribosomal RNA. The polypeptide is Small ribosomal subunit protein uS17 (Rhodococcus jostii (strain RHA1)).